The following is a 455-amino-acid chain: MAVRIARFLGLSTVAYLALANGIDARDTISRDVIILGGGSSGTYAAIRLRDQGKTVAVVERNNYLGGHGETYYTEDNTPLNFGVEGFFNTTVTRNYLERLQVPYGRRDPAPAHEDYVNLNTGQRTEYTPGQLQDREAFAKWVDAISQFGFLDDGVYRIPEPVPEDLISPFADFVKKYHLEDAVYALFSHTSGDVLEMITLYVIQYIGVPHAAALNEGYVRPIEGIAALYKSAGKELGSDVLLETTPEAVQRFEDGVEVIVRSADGTKTLLKGKQLLVTIPPLLENLHGFPLSDQESRLFSKWQYHQYWAALVNDTGLPDDVNIVNVDTERLYGVPEEPFIWRLDNHWAPGYHNIKLVGGSEFGEDEAKAYMYERLDLLHAEGTYATHKPEIVKFASHTPVTMFVSAEEIRGGFYRQLYELQGLNSTFWTGATWASDYSTLLWGYTDEVLDQMASS.

The first 25 residues, 1 to 25, serve as a signal peptide directing secretion; sequence MAVRIARFLGLSTVAYLALANGIDA.

This sequence belongs to the beta-cyclopiazonate dehydrogenase family. It depends on FAD as a cofactor.

The enzyme catalyses beta-cyclopiazonate + A = alpha-cyclopiazonate + AH2. Beta-cyclopiazonate dehydrogenase involved in the synthesis of the fungal neurotoxin alpha-cyclopiazonic acid (CPA). CpaO carries out the dehydrogenation of beta-CPA to yield an unstable enimine product, which is captured by intramolecular cyclization to create the pentacyclic fused scaffold of alpha-cyclopiazonate. This chain is Beta-cyclopiazonate dehydrogenase, found in Aspergillus oryzae (strain ATCC 42149 / RIB 40) (Yellow koji mold).